The following is a 355-amino-acid chain: Alanine racemase (355 aa).

Lys34 serves as the catalytic Proton acceptor; specific for D-alanine. N6-(pyridoxal phosphate)lysine is present on Lys34. Arg133 is a substrate binding site. The active-site Proton acceptor; specific for L-alanine is Tyr249. Met297 contacts substrate.

Belongs to the alanine racemase family. Pyridoxal 5'-phosphate serves as cofactor.

It carries out the reaction L-alanine = D-alanine. It participates in amino-acid biosynthesis; D-alanine biosynthesis; D-alanine from L-alanine: step 1/1. Catalyzes the interconversion of L-alanine and D-alanine. May also act on other amino acids. This is Alanine racemase (alr) from Rickettsia canadensis (strain McKiel).